The primary structure comprises 808 residues: Copal-8-ol diphosphate hydratase, chloroplastic (808 aa).

Residues 1–50 (MAFTFTSAHLFLPVTENHSVHVNYSIPPGNWRLWSTAKGGSNKLDIRRLR) constitute a chloroplast transit peptide. Residues 190–219 (DKCQKGLKFFRDNISKLEKENVEASAQMLS) adopt a coiled-coil conformation. Lys-256 is a binding site for substrate. 2 residues coordinate Mg(2+): Asp-391 and Asp-393. The short motif at 391–394 (DLDD) is the DXDD motif element. Lys-477 serves as a coordination point for substrate.

The protein belongs to the terpene synthase family. Mg(2+) serves as cofactor. As to expression, expressed in stems, leaves and trichomes. Not detected in roots and seeds. Higher expression in young leaves than in fully expanded leaves.

It localises to the plastid. It is found in the chloroplast. The catalysed reaction is (2E,6E,10E)-geranylgeranyl diphosphate + H2O = 8-hydroxycopalyl diphosphate. It participates in secondary metabolite biosynthesis; terpenoid biosynthesis. In terms of biological role, involved in the biosynthesis of oxygen-containing labdane-type diterpenes that may be implicated in direct and indirect defense mechanisms. No activity with geranyl diphosphate or farnesyl diphosphate as substrate. The chain is Copal-8-ol diphosphate hydratase, chloroplastic from Cistus creticus subsp. creticus (Rock rose).